The primary structure comprises 147 residues: 6,7-dimethyl-8-ribityllumazine synthase (147 aa).

5-amino-6-(D-ribitylamino)uracil contacts are provided by residues Phe16, 48 to 50, and 73 to 75; these read TFD and AVI. 78–79 lines the (2S)-2-hydroxy-3-oxobutyl phosphate pocket; the sequence is DT. His81 functions as the Proton donor in the catalytic mechanism. Leu106 is a 5-amino-6-(D-ribitylamino)uracil binding site. Arg121 is a binding site for (2S)-2-hydroxy-3-oxobutyl phosphate.

The protein belongs to the DMRL synthase family.

It carries out the reaction (2S)-2-hydroxy-3-oxobutyl phosphate + 5-amino-6-(D-ribitylamino)uracil = 6,7-dimethyl-8-(1-D-ribityl)lumazine + phosphate + 2 H2O + H(+). It functions in the pathway cofactor biosynthesis; riboflavin biosynthesis; riboflavin from 2-hydroxy-3-oxobutyl phosphate and 5-amino-6-(D-ribitylamino)uracil: step 1/2. Functionally, catalyzes the formation of 6,7-dimethyl-8-ribityllumazine by condensation of 5-amino-6-(D-ribitylamino)uracil with 3,4-dihydroxy-2-butanone 4-phosphate. This is the penultimate step in the biosynthesis of riboflavin. The sequence is that of 6,7-dimethyl-8-ribityllumazine synthase from Aeropyrum pernix (strain ATCC 700893 / DSM 11879 / JCM 9820 / NBRC 100138 / K1).